Reading from the N-terminus, the 194-residue chain is Thioredoxin peroxidase (194 aa).

The Thioredoxin domain occupies 2-160 (LQPNMPAPNF…ALRLLDAFIF (159 aa)). C47 serves as the catalytic Cysteine sulfenic acid (-SOH) intermediate.

This sequence belongs to the peroxiredoxin family. AhpC/Prx1 subfamily. In terms of assembly, homodimer; disulfide-linked, upon oxidation.

The catalysed reaction is a hydroperoxide + [thioredoxin]-dithiol = an alcohol + [thioredoxin]-disulfide + H2O. Antioxidant. Could be involved in protection against reactive oxygen species (ROS) generated by metabolic processes and/or protection of the parasite against ROS released by immune effector cells. Its function is as follows. Thiol-specific peroxidase that catalyzes the reduction of hydrogen peroxide and organic hydroperoxides to water and alcohols, respectively. Plays a role in cell protection against oxidative stress by detoxifying peroxides and as sensor of hydrogen peroxide-mediated signaling events. The polypeptide is Thioredoxin peroxidase (Fasciola hepatica (Liver fluke)).